Reading from the N-terminus, the 655-residue chain is uncharacterized protein (655 aa).

Residues 1–23 (MKRTIKYLSFLGLIPFLSITTIS) form the signal peptide. C24 carries the N-palmitoyl cysteine lipid modification. C24 carries S-diacylglycerol cysteine lipidation.

Belongs to the MG067/MG068/MG395 family.

It is found in the cell membrane. This is an uncharacterized protein from Mycoplasma capricolum subsp. capricolum (strain California kid / ATCC 27343 / NCTC 10154).